Reading from the N-terminus, the 430-residue chain is Trigger factor (430 aa).

The region spanning 163–248 is the PPIase FKBP-type domain; that stretch reads GDTAVFDFAG…LHEVKTKQVP (86 aa).

Belongs to the FKBP-type PPIase family. Tig subfamily.

The protein localises to the cytoplasm. It carries out the reaction [protein]-peptidylproline (omega=180) = [protein]-peptidylproline (omega=0). Its function is as follows. Involved in protein export. Acts as a chaperone by maintaining the newly synthesized protein in an open conformation. Functions as a peptidyl-prolyl cis-trans isomerase. This is Trigger factor from Exiguobacterium sp. (strain ATCC BAA-1283 / AT1b).